We begin with the raw amino-acid sequence, 201 residues long: Recombination protein RecR (201 aa).

Residues 59-74 (CKICGNIDTENICRIC) form a C4-type zinc finger. Positions 82–177 (SIIAIVETVA…KISRLASGIP (96 aa)) constitute a Toprim domain.

It belongs to the RecR family.

Its function is as follows. May play a role in DNA repair. It seems to be involved in an RecBC-independent recombinational process of DNA repair. It may act with RecF and RecO. This is Recombination protein RecR from Rickettsia massiliae (strain Mtu5).